A 119-amino-acid chain; its full sequence is Ribonuclease P protein component (119 aa).

This sequence belongs to the RnpA family. Consists of a catalytic RNA component (M1 or rnpB) and a protein subunit.

The catalysed reaction is Endonucleolytic cleavage of RNA, removing 5'-extranucleotides from tRNA precursor.. Its function is as follows. RNaseP catalyzes the removal of the 5'-leader sequence from pre-tRNA to produce the mature 5'-terminus. It can also cleave other RNA substrates such as 4.5S RNA. The protein component plays an auxiliary but essential role in vivo by binding to the 5'-leader sequence and broadening the substrate specificity of the ribozyme. This is Ribonuclease P protein component from Pasteurella multocida (strain Pm70).